The following is a 47-amino-acid chain: Delta-actitoxin-Aspp1b (47 aa).

3 disulfide bridges follow: C4-C44, C6-C34, and C27-C45.

The protein belongs to the sea anemone sodium channel inhibitory toxin family. Type I subfamily.

Its subcellular location is the secreted. It is found in the nematocyst. Functionally, binds specifically to voltage-gated sodium channels (Nav), thereby delaying their inactivation during signal transduction. Has a longer mammalian heart stimulation effect than Hk2a, Hk8a and Hk16a. This is Delta-actitoxin-Aspp1b from Anthopleura sp. (strain 'Zhanjiang') (Sea anemone).